Here is a 492-residue protein sequence, read N- to C-terminus: Probable Xaa-Pro aminopeptidase ACLA_020440 (492 aa).

Mn(2+)-binding residues include Asp-272, Asp-283, Glu-421, and Glu-460.

The protein belongs to the peptidase M24B family. It depends on Mn(2+) as a cofactor.

The catalysed reaction is Release of any N-terminal amino acid, including proline, that is linked to proline, even from a dipeptide or tripeptide.. In terms of biological role, catalyzes the removal of a penultimate prolyl residue from the N-termini of peptides. The protein is Probable Xaa-Pro aminopeptidase ACLA_020440 of Aspergillus clavatus (strain ATCC 1007 / CBS 513.65 / DSM 816 / NCTC 3887 / NRRL 1 / QM 1276 / 107).